The following is a 142-amino-acid chain: 3-hydroxyacyl-[acyl-carrier-protein] dehydratase FabZ (142 aa).

Residue H48 is part of the active site.

This sequence belongs to the thioester dehydratase family. FabZ subfamily.

It localises to the cytoplasm. The catalysed reaction is a (3R)-hydroxyacyl-[ACP] = a (2E)-enoyl-[ACP] + H2O. Involved in unsaturated fatty acids biosynthesis. Catalyzes the dehydration of short chain beta-hydroxyacyl-ACPs and long chain saturated and unsaturated beta-hydroxyacyl-ACPs. This chain is 3-hydroxyacyl-[acyl-carrier-protein] dehydratase FabZ, found in Anoxybacillus flavithermus (strain DSM 21510 / WK1).